We begin with the raw amino-acid sequence, 402 residues long: Arginine biosynthesis bifunctional protein ArgJ (402 aa).

Substrate-binding residues include threonine 149, lysine 175, threonine 186, glutamate 266, asparagine 397, and threonine 402. Threonine 186 functions as the Nucleophile in the catalytic mechanism.

The protein belongs to the ArgJ family. Heterotetramer of two alpha and two beta chains.

It is found in the cytoplasm. The enzyme catalyses N(2)-acetyl-L-ornithine + L-glutamate = N-acetyl-L-glutamate + L-ornithine. It carries out the reaction L-glutamate + acetyl-CoA = N-acetyl-L-glutamate + CoA + H(+). It participates in amino-acid biosynthesis; L-arginine biosynthesis; L-ornithine and N-acetyl-L-glutamate from L-glutamate and N(2)-acetyl-L-ornithine (cyclic): step 1/1. It functions in the pathway amino-acid biosynthesis; L-arginine biosynthesis; N(2)-acetyl-L-ornithine from L-glutamate: step 1/4. Its function is as follows. Catalyzes two activities which are involved in the cyclic version of arginine biosynthesis: the synthesis of N-acetylglutamate from glutamate and acetyl-CoA as the acetyl donor, and of ornithine by transacetylation between N(2)-acetylornithine and glutamate. This is Arginine biosynthesis bifunctional protein ArgJ from Prochlorococcus marinus subsp. pastoris (strain CCMP1986 / NIES-2087 / MED4).